Reading from the N-terminus, the 441-residue chain is Queuine tRNA-ribosyltransferase accessory subunit 2 (441 aa).

The Zn(2+) site is built by Cys-307, Cys-309, Cys-312, and His-338.

This sequence belongs to the queuine tRNA-ribosyltransferase family. QTRT2 subfamily. In terms of assembly, heterodimer of a catalytic subunit and an accessory subunit. Zn(2+) serves as cofactor.

Its subcellular location is the cytoplasm. Non-catalytic subunit of the queuine tRNA-ribosyltransferase (TGT) that catalyzes the base-exchange of a guanine (G) residue with queuine (Q) at position 34 (anticodon wobble position) in tRNAs with GU(N) anticodons (tRNA-Asp, -Asn, -His and -Tyr), resulting in the hypermodified nucleoside queuosine (7-(((4,5-cis-dihydroxy-2-cyclopenten-1-yl)amino)methyl)-7-deazaguanosine). In Schizosaccharomyces pombe (strain 972 / ATCC 24843) (Fission yeast), this protein is Queuine tRNA-ribosyltransferase accessory subunit 2 (qtr2).